A 249-amino-acid chain; its full sequence is Ditrans,polycis-undecaprenyl-diphosphate synthase ((2E,6E)-farnesyl-diphosphate specific) (249 aa).

The active site involves Asp29. Residue Asp29 coordinates Mg(2+). Substrate is bound by residues 30-33 (GNGR), Trp34, Arg42, His46, and 74-76 (STE). Catalysis depends on Asn77, which acts as the Proton acceptor. Residues Trp78, Arg80, Arg197, and 203–205 (RLS) each bind substrate. Residue Glu216 participates in Mg(2+) binding.

It belongs to the UPP synthase family. Homodimer. It depends on Mg(2+) as a cofactor.

The catalysed reaction is 8 isopentenyl diphosphate + (2E,6E)-farnesyl diphosphate = di-trans,octa-cis-undecaprenyl diphosphate + 8 diphosphate. Functionally, generates ditrans,octacis-undecaprenyl pyrophosphate (UPP) from isopentenyl pyrophosphate (IPP) and farnesyl diphosphate. UPP is the precursor of glycosyl carrier lipid in the biosynthesis of bacterial cell wall polysaccharide components such as peptidoglycan and lipopolysaccharide. This is Ditrans,polycis-undecaprenyl-diphosphate synthase ((2E,6E)-farnesyl-diphosphate specific) (uppS) from Micrococcus luteus (Micrococcus lysodeikticus).